A 175-amino-acid chain; its full sequence is MDMRQVNSLSYEEFVETFGNVVERCPVVAAAVWSGRPFANSHDLEASIGEFIDSLPVAGQEGIVRCHPDLAGRDLKRGALTAESRGEQTQAGLTLLDAGDAARMNRLNAQYKERFGFPFVICARMNNKEEILLRLAERLGNEPAQERQCAIEEVKKICQLRLQDIIQCPATHTKL.

Residue histidine 67 is the Proton donor of the active site. Substrate contacts are provided by residues proline 68, serine 84 to glutamine 88, and phenylalanine 119 to alanine 123. The Microbody targeting signal signature appears at threonine 173–leucine 175.

The protein belongs to the OHCU decarboxylase family. Homodimer.

It localises to the peroxisome. It catalyses the reaction 5-hydroxy-2-oxo-4-ureido-2,5-dihydro-1H-imidazole-5-carboxylate + H(+) = (S)-allantoin + CO2. It participates in purine metabolism; urate degradation; (S)-allantoin from urate: step 3/3. In terms of biological role, catalyzes the stereoselective decarboxylation of 2-oxo-4-hydroxy-4-carboxy-5-ureidoimidazoline (OHCU) to (S)-allantoin. The polypeptide is 2-oxo-4-hydroxy-4-carboxy-5-ureidoimidazoline decarboxylase (urad) (Amia calva (Bowfin)).